We begin with the raw amino-acid sequence, 186 residues long: Hydra actinoporin-like toxin 6 (186 aa).

The first 21 residues, 1-21 (MLVYVCLVVILIQLPFGAAGG), serve as a signal peptide directing secretion. The Cell attachment site motif lies at 158–160 (RAG).

The protein belongs to the actinoporin family. HALT subfamily. In terms of assembly, octamer or nonamer in membranes. Monomer in the soluble state. In vitro, interacts with folate receptor alpha (of target organism). As to expression, expressed female germline during oogenesis.

Its subcellular location is the nematocyst. It is found in the secreted. The protein resides in the target cell membrane. Functionally, pore-forming protein that forms hydrophilic pores and causes cytolysis. Compared to equinatoxin-2 (AC P61914), it reveals lower cytolysis activity (5-12-fold difference, tested on erythrocytes), a larger pore size (probably 2-3 nm) and different affinity to membrane lipids (100-fold lower affinity to sphingomyelin). Binds to sulfatides. Shows cytolytic activity on HeLa cells, with a different potency than its paralogs (from most potent to less potent: HALT-4&gt;HALT-6~HALT-1&gt;HALT-3&gt;HALT-7&gt;HALT-2). Pore formation is a multi-step process that involves specific recognition of membrane lipid by a protein aromatic residues rich region, firm binding to the membrane (mainly driven by hydrophobic interactions) accompanied by the transfer of the N-terminal region to the lipid-water interface and finally pore formation after oligomerization of monomers. In vitro, binds to the folate receptor alpha (FOLR1), a GPI-anchored membrane protein that plays a major role in the uptake of folate/folic acid into cells via endocytosis, suggesting a possible involvement of this receptor in the mechanism of HALT-1-induced cell lysis. In vivo, does not cause visible paralysis in larvae of the blowfly Sarcophaga faculata, the most common arthropod prey of Hydra. This is Hydra actinoporin-like toxin 6 from Hydra vulgaris (Hydra).